A 478-amino-acid polypeptide reads, in one-letter code: Stromelysin-1 (478 aa).

An N-terminal signal peptide occupies residues Met1–Ala17. Positions Tyr18–Asp99 are cleaved as a propeptide — activation peptide. A Cysteine switch motif is present at residues Pro90–Val97. Cys92 is a Zn(2+) binding site. Ca(2+)-binding residues include Asp124 and Asp158. Zn(2+) is bound by residues His168 and Asp170. Ca(2+) contacts are provided by Asp175, Gly176, Gly178, and Val180. His183 lines the Zn(2+) pocket. Ca(2+) contacts are provided by Gly190 and Asp194. A Zn(2+)-binding site is contributed by His196. Positions 198, 199, and 201 each coordinate Ca(2+). His218 contacts Zn(2+). Glu219 is an active-site residue. Residues His222 and His228 each contribute to the Zn(2+) site. The interval Gln260–Gly286 is disordered. Over residues Pro266–Pro277 the composition is skewed to low complexity. Hemopexin repeat units lie at residues Pro288 to Leu337, Pro338 to Pro384, Val386 to Val434, and Asp435 to Cys478. The cysteines at positions 291 and 478 are disulfide-linked. Residue Asp298 coordinates Ca(2+). Positions 390 and 439 each coordinate Ca(2+). Asn452 carries N-linked (GlcNAc...) asparagine glycosylation.

This sequence belongs to the peptidase M10A family. Ca(2+) serves as cofactor. Zn(2+) is required as a cofactor.

The protein resides in the secreted. The protein localises to the extracellular space. Its subcellular location is the extracellular matrix. The enzyme catalyses Preferential cleavage where P1', P2' and P3' are hydrophobic residues.. Functionally, metalloproteinase with a rather broad substrate specificity that can degrade fibronectin, laminin, gelatins of type I, III, IV, and V; collagens III, IV, X, and IX, and cartilage proteoglycans. Activates different molecules including growth factors, plasminogen or other matrix metalloproteinases such as MMP9. Once released into the extracellular matrix (ECM), the inactive pro-enzyme is activated by the plasmin cascade signaling pathway. Also acts intracellularly. For example, in dopaminergic neurons, gets activated by the serine protease HTRA2 upon stress and plays a pivotal role in DA neuronal degeneration by mediating microglial activation and alpha-synuclein/SNCA cleavage. In addition, plays a role in immune response and possesses antiviral activity against various viruses. Mechanistically, translocates from the cytoplasm into the cell nucleus upon virus infection to influence NF-kappa-B activities. In Canis lupus familiaris (Dog), this protein is Stromelysin-1 (MMP3).